A 611-amino-acid chain; its full sequence is E-selectin (611 aa).

The signal sequence occupies residues 1–22; that stretch reads MITSQLLPALTLVLLLFKEGGA. Residues 23 to 140 enclose the C-type lectin domain; it reads WSYNASTEAM…CDKKKLALCY (118 aa). Over 23 to 557 the chain is Extracellular; that stretch reads WSYNASTEAM…CEAPTESSIP (535 aa). N-linked (GlcNAc...) asparagine glycosylation is present at asparagine 26. Disulfide bonds link cysteine 41-cysteine 139, cysteine 112-cysteine 131, cysteine 144-cysteine 155, cysteine 149-cysteine 164, cysteine 166-cysteine 175, cysteine 181-cysteine 225, cysteine 194-cysteine 207, cysteine 211-cysteine 238, cysteine 243-cysteine 287, cysteine 256-cysteine 269, cysteine 273-cysteine 300, cysteine 305-cysteine 350, cysteine 336-cysteine 363, cysteine 368-cysteine 413, cysteine 399-cysteine 426, cysteine 431-cysteine 476, cysteine 462-cysteine 489, cysteine 494-cysteine 535, and cysteine 521-cysteine 548. Residues glutamate 102, asparagine 104, and glutamate 110 each coordinate Ca(2+). Residues 102–110, 114–119, and 127–129 contribute to the a carbohydrate site; these read EPNNKQNDE, EIYIKR, and NDE. Ca(2+)-binding residues include asparagine 127 and aspartate 128. An EGF-like domain is found at 141-176; the sequence is TAACTPTSCSGHGECVETVNNYTCKCHPGFRGLRCE. Asparagine 161 carries N-linked (GlcNAc...) asparagine glycosylation. Sushi domains are found at residues 179–240 and 241–302; these read VTCQ…ACNV and VECS…TCKA. N-linked (GlcNAc...) asparagine glycosylation occurs at asparagine 204. Asparagine 266 carries N-linked (GlcNAc...) asparagine glycosylation. Residues asparagine 313 and asparagine 333 are each glycosylated (N-linked (GlcNAc...) asparagine). 4 consecutive Sushi domains span residues 316–365, 367–428, 430–491, and 492–550; these read VSCS…VCKA, QCKA…TCEA, KCDA…SCQV, and VQCF…TCEA. Asparagine 528 is a glycosylation site (N-linked (GlcNAc...) asparagine). The chain crosses the membrane as a helical span at residues 558-579; that stretch reads LAVGLTAGGTSLLTVASFLLWL. The Cytoplasmic portion of the chain corresponds to 580–611; it reads LKRLRKRAKKFVPASSCQSLQSDGSYHMPCSI.

Belongs to the selectin/LECAM family. As to quaternary structure, interacts with SELPLG/PSGL1 and PODXL2 through the sialyl Lewis X epitope. SELPLG sulfation appears not to be required for this interaction.

The protein resides in the cell membrane. Cell-surface glycoprotein having a role in immunoadhesion. Mediates in the adhesion of blood neutrophils in cytokine-activated endothelium through interaction with SELPLG/PSGL1. May have a role in capillary morphogenesis. This chain is E-selectin (SELE), found in Canis lupus familiaris (Dog).